Here is a 183-residue protein sequence, read N- to C-terminus: Oligoribonuclease (183 aa).

The region spanning 9–172 is the Exonuclease domain; it reads LIWIDLEMTG…DDIRESIEEL (164 aa). Tyrosine 130 is a catalytic residue.

The protein belongs to the oligoribonuclease family.

It is found in the cytoplasm. Its function is as follows. 3'-to-5' exoribonuclease specific for small oligoribonucleotides. The chain is Oligoribonuclease from Haemophilus ducreyi (strain 35000HP / ATCC 700724).